Here is a 253-residue protein sequence, read N- to C-terminus: Tryptophan synthase alpha chain (253 aa).

Active-site proton acceptor residues include glutamate 47 and aspartate 58.

Belongs to the TrpA family. In terms of assembly, tetramer of two alpha and two beta chains.

The catalysed reaction is (1S,2R)-1-C-(indol-3-yl)glycerol 3-phosphate + L-serine = D-glyceraldehyde 3-phosphate + L-tryptophan + H2O. Its pathway is amino-acid biosynthesis; L-tryptophan biosynthesis; L-tryptophan from chorismate: step 5/5. Its function is as follows. The alpha subunit is responsible for the aldol cleavage of indoleglycerol phosphate to indole and glyceraldehyde 3-phosphate. The polypeptide is Tryptophan synthase alpha chain (Lactococcus lactis subsp. lactis (strain IL1403) (Streptococcus lactis)).